The following is a 387-amino-acid chain: (S)-8-oxocitronellyl enol synthase (387 aa).

NADP(+) is bound by residues Thr-36–Ile-38, Arg-64–Arg-65, Asp-82–Ile-83, Ser-106–Trp-107, and Gln-140. Residues Lys-144 and Tyr-177 contribute to the active site. Substrate is bound by residues Lys-144 and Tyr-177. NADP(+) is bound by residues Tyr-177 and Ser-211–Met-213.

This sequence belongs to the short-chain dehydrogenases/reductases (SDR) family. Highly divergent. Expressed in leaves.

The catalysed reaction is (S)-8-oxocitronellyl enol + NADP(+) = (6E)-8-oxogeranial + NADPH + H(+). It catalyses the reaction (S)-8-oxocitronellyl enol + NAD(+) = (6E)-8-oxogeranial + NADH + H(+). It carries out the reaction (R)-8-oxocitronellyl enol + NADP(+) = (6E)-8-oxogeranial + NADPH + H(+). Functionally, iridoid synthase that catalyzes the first step in generation of the iridoid ring scaffold using the linear monoterpene (6E)-8-oxogeranial as substrate. Reduces 8-oxogeranial, generating an unstable product that is subsequently cyclized into several possible products, either non-enzymically or by dedicated cyclases. Iridoids comprise a large family of distinctive bicyclic monoterpenes that possess a wide range of pharmacological activities, including anticancer, anti-inflammatory, antifungal and antibacterial activities. This is (S)-8-oxocitronellyl enol synthase from Antirrhinum majus (Garden snapdragon).